The chain runs to 349 residues: Magnesium-protoporphyrin IX monomethyl ester [oxidative] cyclase (349 aa).

The protein belongs to the AcsF family. Fe cation serves as cofactor.

The protein localises to the plastid. Its subcellular location is the chloroplast. The catalysed reaction is Mg-protoporphyrin IX 13-monomethyl ester + 3 NADPH + 3 O2 + 2 H(+) = 3,8-divinyl protochlorophyllide a + 3 NADP(+) + 5 H2O. The protein operates within porphyrin-containing compound metabolism; chlorophyll biosynthesis (light-independent). Its function is as follows. Catalyzes the formation of the isocyclic ring in chlorophyll biosynthesis. Mediates the cyclase reaction, which results in the formation of divinylprotochlorophyllide (Pchlide) characteristic of all chlorophylls from magnesium-protoporphyrin IX 13-monomethyl ester (MgPMME). In Pyropia yezoensis (Susabi-nori), this protein is Magnesium-protoporphyrin IX monomethyl ester [oxidative] cyclase.